A 311-amino-acid chain; its full sequence is uncharacterized protein (311 aa).

This is an uncharacterized protein from Bacillus subtilis (strain 168).